The following is a 245-amino-acid chain: Orotidine 5'-phosphate decarboxylase (245 aa).

Substrate contacts are provided by residues aspartate 22, lysine 44, 71-80, threonine 131, arginine 192, glutamine 201, glycine 221, and arginine 222; that span reads DLKFHDIPNT. Lysine 73 (proton donor) is an active-site residue.

The protein belongs to the OMP decarboxylase family. Type 1 subfamily. In terms of assembly, homodimer.

The enzyme catalyses orotidine 5'-phosphate + H(+) = UMP + CO2. It participates in pyrimidine metabolism; UMP biosynthesis via de novo pathway; UMP from orotate: step 2/2. In terms of biological role, catalyzes the decarboxylation of orotidine 5'-monophosphate (OMP) to uridine 5'-monophosphate (UMP). This Escherichia coli (strain K12 / MC4100 / BW2952) protein is Orotidine 5'-phosphate decarboxylase.